The chain runs to 279 residues: Thymidylate synthase (279 aa).

133–134 (RR) lines the dUMP pocket. Cys-154 functions as the Nucleophile in the catalytic mechanism. DUMP is bound by residues 178–181 (RSND), Asn-189, and 219–221 (HIY). Asp-181 serves as a coordination point for (6R)-5,10-methylene-5,6,7,8-tetrahydrofolate. Residue Ala-278 coordinates (6R)-5,10-methylene-5,6,7,8-tetrahydrofolate.

The protein belongs to the thymidylate synthase family. Bacterial-type ThyA subfamily. In terms of assembly, homodimer.

The protein resides in the cytoplasm. It carries out the reaction dUMP + (6R)-5,10-methylene-5,6,7,8-tetrahydrofolate = 7,8-dihydrofolate + dTMP. It participates in pyrimidine metabolism; dTTP biosynthesis. In terms of biological role, catalyzes the reductive methylation of 2'-deoxyuridine-5'-monophosphate (dUMP) to 2'-deoxythymidine-5'-monophosphate (dTMP) while utilizing 5,10-methylenetetrahydrofolate (mTHF) as the methyl donor and reductant in the reaction, yielding dihydrofolate (DHF) as a by-product. This enzymatic reaction provides an intracellular de novo source of dTMP, an essential precursor for DNA biosynthesis. This is Thymidylate synthase from Streptococcus pneumoniae (strain 70585).